The primary structure comprises 934 residues: Replication factor C subunit 1 (934 aa).

The disordered stretch occupies residues 1 to 190; the sequence is MSNSDIRSFF…RSSKSKGLPR (190 aa). Phosphoserine is present on S27. Residues 29-39 are compositionally biased toward basic residues; sequence KPKRSLKKKRI. Positions 89–104 are enriched in polar residues; that stretch reads GVSTTPDEYFEQQSTR. Over residues 118–128 the composition is skewed to basic and acidic residues; that stretch reads TTSKDVVHPVK. Low complexity predominate over residues 165–186; it reads TSKSKSHTTTATTHTSRSSKSK. The BRCT domain occupies 236-326; sequence GNSDCLSGIS…PASGGTGAAA (91 aa). Residues T362, C374, 416–423, and N519 contribute to the ATP site; that span reads GPPGIGKT. Acidic residues predominate over residues 876 to 895; the sequence is AEDEMLEEASDSEAANEEDI. The segment at 876–934 is disordered; that stretch reads AEDEMLEEASDSEAANEEDIDLSKDKFISVPKKPKKRTKAKAEASSSSSTSRRSRKKTA.

It belongs to the activator 1 large subunit family. In terms of assembly, heteropentamer of subunits rfc1, rfc2, rfc3, rfc4 and rfc5 that forms a complex (RFC) with PCNA in the presence of ATP. Interacts with cdc24.

Its subcellular location is the nucleus. It localises to the nucleolus. Its function is as follows. The elongation of primed DNA templates by DNA polymerase delta and epsilon requires the action of the accessory proteins PCNA and activator 1. Subunit 1 is essential for cell cycle progression. It may associate with components of the DNA replication machinery and serve to enhance the efficiency of DNA replication. The protein is Replication factor C subunit 1 (rfc1) of Schizosaccharomyces pombe (strain 972 / ATCC 24843) (Fission yeast).